The chain runs to 535 residues: Calcium-dependent protein kinase 5 (535 aa).

Positions 1 to 46 (MGNACRGSFGGKTFQGYPQPQDHSESNSNPKHNSDSPKPKKEQQPL) are disordered. G2 carries the N-myristoyl glycine lipid modification. C5 carries the S-palmitoyl cysteine lipid modification. Residues 32–43 (HNSDSPKPKKEQ) show a composition bias toward basic and acidic residues. The Protein kinase domain occupies 72–330 (YTLGRKLGQG…AHEVLCHPWI (259 aa)). Residues 78–86 (LGQGQFGTT) and K101 contribute to the ATP site. D196 (proton acceptor) is an active-site residue. The tract at residues 336–366 (APDRALDPAVLSRLKHFSAMNKLKKMALRVI) is autoinhibitory domain. EF-hand domains lie at 373-408 (EEIA…YGST), 409-444 (LKDI…LNKL), 445-480 (DREE…HNIT), and 484-514 (FEDI…GNPC). Ca(2+) contacts are provided by D386, D388, S390, E397, D422, D424, S426, T428, E433, D458, D460, S462, Y464, E469, D492, D494, D496, R498, and E503.

The protein belongs to the protein kinase superfamily. Ser/Thr protein kinase family. CDPK subfamily.

The protein resides in the cell membrane. It carries out the reaction L-seryl-[protein] + ATP = O-phospho-L-seryl-[protein] + ADP + H(+). It catalyses the reaction L-threonyl-[protein] + ATP = O-phospho-L-threonyl-[protein] + ADP + H(+). Its activity is regulated as follows. Activated by calcium. Autophosphorylation may play an important role in the regulation of the kinase activity. Its function is as follows. Regulates the production of reactive oxygen species (ROS) by NADPH oxidase. The sequence is that of Calcium-dependent protein kinase 5 (CPK5) from Solanum tuberosum (Potato).